Here is a 208-residue protein sequence, read N- to C-terminus: Putative archaetidylserine decarboxylase proenzyme (208 aa).

S172 acts as the Schiff-base intermediate with substrate; via pyruvic acid in catalysis. S172 bears the Pyruvic acid (Ser); by autocatalysis mark.

The protein belongs to the phosphatidylserine decarboxylase family. PSD-A subfamily. Heterodimer of a large membrane-associated beta subunit and a small pyruvoyl-containing alpha subunit. Pyruvate is required as a cofactor. In terms of processing, is synthesized initially as an inactive proenzyme. Formation of the active enzyme involves a self-maturation process in which the active site pyruvoyl group is generated from an internal serine residue via an autocatalytic post-translational modification. Two non-identical subunits are generated from the proenzyme in this reaction, and the pyruvate is formed at the N-terminus of the alpha chain, which is derived from the carboxyl end of the proenzyme. The post-translation cleavage follows an unusual pathway, termed non-hydrolytic serinolysis, in which the side chain hydroxyl group of the serine supplies its oxygen atom to form the C-terminus of the beta chain, while the remainder of the serine residue undergoes an oxidative deamination to produce ammonia and the pyruvoyl prosthetic group on the alpha chain.

Its subcellular location is the cell membrane. It carries out the reaction archaetidylserine + H(+) = archaetidylethanolamine + CO2. Catalyzes the formation of archaetidylethanolamine (PtdEtn) from archaetidylserine (PtdSer). The chain is Putative archaetidylserine decarboxylase proenzyme from Methanosarcina mazei (strain ATCC BAA-159 / DSM 3647 / Goe1 / Go1 / JCM 11833 / OCM 88) (Methanosarcina frisia).